Reading from the N-terminus, the 481-residue chain is 5-hydroxytryptamine receptor 2B (481 aa).

Residues 1 to 56 (MALSYRVSELQSTIPEHILQSTFVHVISSNWSGLQTESIPEEMKQIVEEQGNKLHW) lie on the Extracellular side of the membrane. The N-linked (GlcNAc...) asparagine glycan is linked to Asn-30. A helical transmembrane segment spans residues 57–79 (AALLILMVIIPTIGGNTLVILAV). The Cytoplasmic segment spans residues 80-90 (SLEKKLQYATN). Residues 91 to 113 (YFLMSLAVADLLVGLFVMPIALL) form a helical membrane-spanning segment. At 114-129 (TIMFEAMWPLPLVLCP) the chain is on the extracellular side. A disulfide bridge links Cys-128 with Cys-207. The helical transmembrane segment at 130–151 (AWLFLDVLFSTASIMHLCAISV) threads the bilayer. The ergotamine site is built by Asp-135 and Thr-140. The DRY motif; important for ligand-induced conformation changes signature appears at 152 to 154 (DRY). Over 152–171 (DRYIAIKKPIQANQYNSRAT) the chain is Cytoplasmic. A helical transmembrane segment spans residues 172–192 (AFIKITVVWLISIGIAIPVPI). The Extracellular portion of the chain corresponds to 193-216 (KGIETDVDNPNNITCVLTKERFGD). Residue Leu-209 coordinates ergotamine. Residues 212–215 (ERFG) carry the [DE]RFG motif; may stabilize a conformation that preferentially activates signaling via beta-arrestin family members motif. A helical transmembrane segment spans residues 217–239 (FMLFGSLAAFFTPLAIMIVTYFL). Topologically, residues 240-324 (TIHALQKKAY…TISNEQRASK (85 aa)) are cytoplasmic. Residues 325–345 (VLGIVFFLFLLMWCPFFITNI) traverse the membrane as a helical segment. Over 346-360 (TLVLCDSCNQTTLQM) the chain is Extracellular. A disulfide bridge links Cys-350 with Cys-353. The chain crosses the membrane as a helical span at residues 361–382 (LLEIFVWIGYVSSGVNPLVYTL). Positions 376 to 380 (NPLVY) match the NPxxY motif; important for ligand-induced conformation changes and signaling motif. Residues 383–481 (FNKTFRDAFG…DKTEEQVSYV (99 aa)) lie on the Cytoplasmic side of the membrane. A lipid anchor (S-palmitoyl cysteine) is attached at Cys-397. The PDZ-binding motif lies at 479-481 (SYV).

The protein belongs to the G-protein coupled receptor 1 family. Interacts (via C-terminus) with MPDZ. In terms of tissue distribution, ubiquitous. Detected in liver, kidney, heart, pulmonary artery, and intestine. Detected at lower levels in blood, placenta and brain, especially in cerebellum, occipital cortex and frontal cortex.

Its subcellular location is the cell membrane. It is found in the synapse. The protein localises to the synaptosome. G-protein coupled receptor for 5-hydroxytryptamine (serotonin). Also functions as a receptor for various ergot alkaloid derivatives and psychoactive substances. Ligand binding causes a conformation change that triggers signaling via guanine nucleotide-binding proteins (G proteins) and modulates the activity of downstream effectors. HTR2B is coupled to G(q)/G(11) G alpha proteins and activates phospholipase C-beta, releasing diacylglycerol (DAG) and inositol 1,4,5-trisphosphate (IP3) second messengers that modulate the activity of phosphatidylinositol 3-kinase and promote the release of Ca(2+) ions from intracellular stores, respectively. Beta-arrestin family members inhibit signaling via G proteins and mediate activation of alternative signaling pathways. Plays a role in the regulation of dopamine and 5-hydroxytryptamine release, 5-hydroxytryptamine uptake and in the regulation of extracellular dopamine and 5-hydroxytryptamine levels, and thereby affects neural activity. May play a role in the perception of pain. Plays a role in the regulation of behavior, including impulsive behavior. Required for normal proliferation of embryonic cardiac myocytes and normal heart development. Protects cardiomyocytes against apoptosis. Plays a role in the adaptation of pulmonary arteries to chronic hypoxia. Plays a role in vasoconstriction. Required for normal osteoblast function and proliferation, and for maintaining normal bone density. Required for normal proliferation of the interstitial cells of Cajal in the intestine. The sequence is that of 5-hydroxytryptamine receptor 2B from Homo sapiens (Human).